A 234-amino-acid chain; its full sequence is Adenosine 5'-phosphosulfate reductase (234 aa).

[4Fe-4S] cluster-binding residues include Cys-120, Cys-121, Cys-203, and Cys-206. The active-site Nucleophile; cysteine thiosulfonate intermediate is Cys-229.

The protein belongs to the PAPS reductase family. CysH subfamily. The cofactor is [4Fe-4S] cluster.

The protein resides in the cytoplasm. It catalyses the reaction [thioredoxin]-disulfide + sulfite + AMP + 2 H(+) = adenosine 5'-phosphosulfate + [thioredoxin]-dithiol. It functions in the pathway sulfur metabolism; hydrogen sulfide biosynthesis; sulfite from sulfate. Its function is as follows. Catalyzes the formation of sulfite from adenosine 5'-phosphosulfate (APS) using thioredoxin as an electron donor. This is Adenosine 5'-phosphosulfate reductase from Bacillus thuringiensis subsp. konkukian (strain 97-27).